The chain runs to 346 residues: Elongation factor Ts (346 aa).

Residues 80–83 are involved in Mg(2+) ion dislocation from EF-Tu; the sequence is TDFV.

It belongs to the EF-Ts family.

The protein resides in the cytoplasm. Functionally, associates with the EF-Tu.GDP complex and induces the exchange of GDP to GTP. It remains bound to the aminoacyl-tRNA.EF-Tu.GTP complex up to the GTP hydrolysis stage on the ribosome. The sequence is that of Elongation factor Ts from Streptococcus pneumoniae (strain 70585).